A 188-amino-acid chain; its full sequence is Inner kinetochore subunit cnl2 (188 aa).

It belongs to the NKP2 family. As to quaternary structure, component of the inner kinetochore constitutive centromere-associated network (CCAN) (also known as central kinetochore Sim4 complex in fission yeast), which is composed of at least cnl2, cnp3, cnp20, fta1, fta2, fta3, fta4, fta6, fta7, mal2, mhf1, mhf2, mis6, mis15, mis17, sim4 and wip1.

Its subcellular location is the cytoplasm. The protein resides in the nucleus. It is found in the chromosome. It localises to the centromere. The protein localises to the kinetochore. Its function is as follows. Component of the kinetochore, a multiprotein complex that assembles on centromeric DNA and attaches chromosomes to spindle microtubules, mediating chromosome segregation and sister chromatid segregation during meiosis and mitosis. Component of the inner kinetochore constitutive centromere-associated network (CCAN), which serves as a structural platform for outer kinetochore assembly. The protein is Inner kinetochore subunit cnl2 (cnl2) of Schizosaccharomyces pombe (strain 972 / ATCC 24843) (Fission yeast).